A 59-amino-acid polypeptide reads, in one-letter code: Large ribosomal subunit protein bL32 (59 aa).

The tract at residues 1–20 (MAVQQNKKSKSKKGMRRSHD) is disordered. A compositionally biased stretch (basic residues) spans 7 to 19 (KKSKSKKGMRRSH).

The protein belongs to the bacterial ribosomal protein bL32 family.

The chain is Large ribosomal subunit protein bL32 from Nitratidesulfovibrio vulgaris (strain DSM 19637 / Miyazaki F) (Desulfovibrio vulgaris).